Consider the following 231-residue polypeptide: Thiamine import ATP-binding protein ThiQ (231 aa).

The region spanning 2-230 (LRLEDLDIRK…PPPALRGYLG (229 aa)) is the ABC transporter domain. Residue 32-39 (GPSGAGKS) coordinates ATP.

It belongs to the ABC transporter superfamily. Thiamine importer (TC 3.A.1.19.1) family. As to quaternary structure, the complex is composed of two ATP-binding proteins (ThiQ), two transmembrane proteins (ThiP) and a solute-binding protein (ThiB).

The protein resides in the cell inner membrane. The enzyme catalyses thiamine(out) + ATP + H2O = thiamine(in) + ADP + phosphate + H(+). Functionally, part of the ABC transporter complex ThiBPQ involved in thiamine import. Responsible for energy coupling to the transport system. The chain is Thiamine import ATP-binding protein ThiQ from Ruegeria sp. (strain TM1040) (Silicibacter sp.).